The chain runs to 118 residues: Large ribosomal subunit protein bL19 (118 aa).

This sequence belongs to the bacterial ribosomal protein bL19 family.

In terms of biological role, this protein is located at the 30S-50S ribosomal subunit interface and may play a role in the structure and function of the aminoacyl-tRNA binding site. The sequence is that of Large ribosomal subunit protein bL19 from Salinispora arenicola (strain CNS-205).